The chain runs to 159 residues: 2-C-methyl-D-erythritol 2,4-cyclodiphosphate synthase (159 aa).

2 residues coordinate a divalent metal cation: D8 and H10. Residues 8 to 10 and 34 to 35 each bind 4-CDP-2-C-methyl-D-erythritol 2-phosphate; these read DVH and HS. H42 is a binding site for a divalent metal cation. 4-CDP-2-C-methyl-D-erythritol 2-phosphate is bound by residues 56-58, 61-65, 132-135, F139, and R142; these read DIG, FPDTD, and TTTE.

The protein belongs to the IspF family. In terms of assembly, homotrimer. It depends on a divalent metal cation as a cofactor.

The catalysed reaction is 4-CDP-2-C-methyl-D-erythritol 2-phosphate = 2-C-methyl-D-erythritol 2,4-cyclic diphosphate + CMP. Its pathway is isoprenoid biosynthesis; isopentenyl diphosphate biosynthesis via DXP pathway; isopentenyl diphosphate from 1-deoxy-D-xylulose 5-phosphate: step 4/6. Its function is as follows. Involved in the biosynthesis of isopentenyl diphosphate (IPP) and dimethylallyl diphosphate (DMAPP), two major building blocks of isoprenoid compounds. Catalyzes the conversion of 4-diphosphocytidyl-2-C-methyl-D-erythritol 2-phosphate (CDP-ME2P) to 2-C-methyl-D-erythritol 2,4-cyclodiphosphate (ME-CPP) with a corresponding release of cytidine 5-monophosphate (CMP). The sequence is that of 2-C-methyl-D-erythritol 2,4-cyclodiphosphate synthase from Syntrophobacter fumaroxidans (strain DSM 10017 / MPOB).